Reading from the N-terminus, the 397-residue chain is Nicotinate phosphoribosyltransferase (397 aa).

Position 221 is a phosphohistidine; by autocatalysis (H221).

The protein belongs to the NAPRTase family. In terms of processing, transiently phosphorylated on a His residue during the reaction cycle. Phosphorylation strongly increases the affinity for substrates and increases the rate of nicotinate D-ribonucleotide production. Dephosphorylation regenerates the low-affinity form of the enzyme, leading to product release.

The enzyme catalyses nicotinate + 5-phospho-alpha-D-ribose 1-diphosphate + ATP + H2O = nicotinate beta-D-ribonucleotide + ADP + phosphate + diphosphate. It functions in the pathway cofactor biosynthesis; NAD(+) biosynthesis; nicotinate D-ribonucleotide from nicotinate: step 1/1. Functionally, catalyzes the synthesis of beta-nicotinate D-ribonucleotide from nicotinate and 5-phospho-D-ribose 1-phosphate at the expense of ATP. The protein is Nicotinate phosphoribosyltransferase of Herminiimonas arsenicoxydans.